Consider the following 340-residue polypeptide: L-threonine 3-dehydrogenase (340 aa).

Cys-38 is a Zn(2+) binding site. Residues Thr-40 and His-43 each act as charge relay system in the active site. Residues His-63, Glu-64, Cys-93, Cys-96, Cys-99, and Cys-107 each contribute to the Zn(2+) site. NAD(+) is bound by residues Ile-175, Asp-195, Arg-200, Leu-261–Ile-263, and Ile-285–Tyr-286.

This sequence belongs to the zinc-containing alcohol dehydrogenase family. As to quaternary structure, homotetramer. Zn(2+) serves as cofactor.

The protein resides in the cytoplasm. It catalyses the reaction L-threonine + NAD(+) = (2S)-2-amino-3-oxobutanoate + NADH + H(+). The protein operates within amino-acid degradation; L-threonine degradation via oxydo-reductase pathway; glycine from L-threonine: step 1/2. Functionally, catalyzes the NAD(+)-dependent oxidation of L-threonine to 2-amino-3-ketobutyrate. In Xanthomonas axonopodis pv. citri (strain 306), this protein is L-threonine 3-dehydrogenase.